Consider the following 87-residue polypeptide: Protein U62 (87 aa).

Belongs to the herpesviridae UL91 family.

The polypeptide is Protein U62 (U62) (Human herpesvirus 6B (strain Z29) (HHV-6 variant B)).